We begin with the raw amino-acid sequence, 186 residues long: Calcium-binding protein NCSA (186 aa).

4 EF-hand domains span residues 40 to 58 (SGTI…MGVG), 66 to 93 (LFNV…ITRG), 94 to 129 (TPEE…MYKL), and 142 to 177 (DPHD…NPDI). Residues D107, D109, N111, Y113, E118, D155, D157, D159, Y161, and E166 each contribute to the Ca(2+) site.

Belongs to the recoverin family.

In terms of biological role, may prevent cells from entering development prematurely in the presence of environmental nutrients. This is Calcium-binding protein NCSA (ncsA) from Dictyostelium discoideum (Social amoeba).